A 247-amino-acid chain; its full sequence is 6-phosphogluconolactonase (247 aa).

The protein belongs to the glucosamine/galactosamine-6-phosphate isomerase family. 6-phosphogluconolactonase subfamily.

The enzyme catalyses 6-phospho-D-glucono-1,5-lactone + H2O = 6-phospho-D-gluconate + H(+). It functions in the pathway carbohydrate degradation; pentose phosphate pathway; D-ribulose 5-phosphate from D-glucose 6-phosphate (oxidative stage): step 2/3. In terms of biological role, hydrolysis of 6-phosphogluconolactone to 6-phosphogluconate. The sequence is that of 6-phosphogluconolactonase (pgl) from Mycobacterium leprae (strain TN).